The chain runs to 326 residues: Probable iron chelatin transport system permease protein jhp_0822 (326 aa).

10 helical membrane-spanning segments follow: residues 7–27 (IALACVILAVVVLLFGGESLS), 64–84 (ILALLVGASLSGSGVVMQTIL), 91–111 (PFLLGISSGAMLGVAMAIAVV), 113–133 (SNIAILAFFGAILPSLAVLAM), 142–162 (LSLVLSGVVLSAFLSALAGAI), 164–184 (FFVIPQKAQAIVVWLLGSLSL), 187–207 (YKDCLIAFIGLSLGFIPLFLL), 241–261 (VASALAVSVSGTIGWIGLVIP), 275–295 (LLLSSLLMGAFFLLLADVVAK), and 301–321 (DLPVGIATSVLGAPFFLWLLF).

The protein belongs to the binding-protein-dependent transport system permease family. FecCD subfamily.

Its subcellular location is the cell inner membrane. Functionally, part of a binding-protein-dependent transport system for an iron chelatin; probably responsible for the translocation of the substrate across the membrane. The sequence is that of Probable iron chelatin transport system permease protein jhp_0822 from Helicobacter pylori (strain J99 / ATCC 700824) (Campylobacter pylori J99).